An 87-amino-acid polypeptide reads, in one-letter code: Class II metallothionein-like protein 1A (87 aa).

Belongs to the metallothionein superfamily. Type 15 family. As to expression, expressed in developing seeds.

Metallothioneins have a high content of cysteine residues that bind various heavy metals. The sequence is that of Class II metallothionein-like protein 1A (MT21A) from Oryza sativa subsp. japonica (Rice).